The chain runs to 163 residues: Nucleotide-binding protein Asuc_2113 (163 aa).

Belongs to the YajQ family.

Nucleotide-binding protein. This chain is Nucleotide-binding protein Asuc_2113, found in Actinobacillus succinogenes (strain ATCC 55618 / DSM 22257 / CCUG 43843 / 130Z).